A 501-amino-acid polypeptide reads, in one-letter code: IQ domain-containing protein M (501 aa).

Residues 237–247 are compositionally biased toward basic and acidic residues; the sequence is ERQPIKPEPKS. Positions 237 to 262 are disordered; that stretch reads ERQPIKPEPKSQPRIKGTPNKTDKLD. One can recognise an IQ domain in the interval 290-319; the sequence is LIRMVTVMQAHVRGWLERKRLQRVMTKALD.

In Homo sapiens (Human), this protein is IQ domain-containing protein M.